Here is a 462-residue protein sequence, read N- to C-terminus: Glycine--tRNA ligase (462 aa).

2 residues coordinate substrate: Arg99 and Glu174. ATP is bound by residues Arg206 to Glu208, Phe216 to Phe221, Glu290 to Leu291, and Gly334 to Arg337. Phe221–Glu225 is a binding site for substrate. Position 330–334 (Glu330–Gly334) interacts with substrate.

Belongs to the class-II aminoacyl-tRNA synthetase family. As to quaternary structure, homodimer.

The protein localises to the cytoplasm. It catalyses the reaction tRNA(Gly) + glycine + ATP = glycyl-tRNA(Gly) + AMP + diphosphate. Its function is as follows. Catalyzes the attachment of glycine to tRNA(Gly). This is Glycine--tRNA ligase from Macrococcus caseolyticus (strain JCSC5402) (Macrococcoides caseolyticum).